The primary structure comprises 214 residues: Redox-sensing transcriptional repressor Rex (214 aa).

The H-T-H motif DNA-binding region spans 17 to 56 (LYYRIFKRFHADQVEKASSKQIADAMGIDSATVRRDFSYF). 91-96 (GCGNIG) serves as a coordination point for NAD(+).

Belongs to the transcriptional regulatory Rex family. In terms of assembly, homodimer.

The protein localises to the cytoplasm. Modulates transcription in response to changes in cellular NADH/NAD(+) redox state. This chain is Redox-sensing transcriptional repressor Rex, found in Streptococcus pyogenes serotype M1.